Consider the following 141-residue polypeptide: Large ribosomal subunit protein uL11 (141 aa).

Belongs to the universal ribosomal protein uL11 family. Part of the ribosomal stalk of the 50S ribosomal subunit. Interacts with L10 and the large rRNA to form the base of the stalk. L10 forms an elongated spine to which L12 dimers bind in a sequential fashion forming a multimeric L10(L12)X complex. One or more lysine residues are methylated.

Functionally, forms part of the ribosomal stalk which helps the ribosome interact with GTP-bound translation factors. The sequence is that of Large ribosomal subunit protein uL11 from Alkaliphilus metalliredigens (strain QYMF).